We begin with the raw amino-acid sequence, 159 residues long: Phosphopantetheine adenylyltransferase (159 aa).

Ser8 serves as a coordination point for substrate. Residues 8-9 and His16 each bind ATP; that span reads SF. Substrate-binding residues include Lys40, Thr72, and Arg86. ATP contacts are provided by residues 87 to 89, Glu97, and 122 to 128; these read GLR and HSFVSSS.

This sequence belongs to the bacterial CoaD family. In terms of assembly, homohexamer. Mg(2+) is required as a cofactor.

The protein resides in the cytoplasm. The catalysed reaction is (R)-4'-phosphopantetheine + ATP + H(+) = 3'-dephospho-CoA + diphosphate. The protein operates within cofactor biosynthesis; coenzyme A biosynthesis; CoA from (R)-pantothenate: step 4/5. In terms of biological role, reversibly transfers an adenylyl group from ATP to 4'-phosphopantetheine, yielding dephospho-CoA (dPCoA) and pyrophosphate. The chain is Phosphopantetheine adenylyltransferase from Synechococcus sp. (strain JA-2-3B'a(2-13)) (Cyanobacteria bacterium Yellowstone B-Prime).